The following is a 455-amino-acid chain: uncharacterized protein (455 aa).

Residues 1–24 form the signal peptide; sequence MKTTKILLHTGVLALSLLATQVMA.

This is an uncharacterized protein from Pseudomonas aeruginosa (strain ATCC 15692 / DSM 22644 / CIP 104116 / JCM 14847 / LMG 12228 / 1C / PRS 101 / PAO1).